The sequence spans 130 residues: Small ribosomal subunit protein uS8 (130 aa).

Belongs to the universal ribosomal protein uS8 family. In terms of assembly, part of the 30S ribosomal subunit.

Functionally, one of the primary rRNA binding proteins, it binds directly to 16S rRNA central domain where it helps coordinate assembly of the platform of the 30S subunit. The sequence is that of Small ribosomal subunit protein uS8 from Haloarcula marismortui (strain ATCC 43049 / DSM 3752 / JCM 8966 / VKM B-1809) (Halobacterium marismortui).